Consider the following 210-residue polypeptide: Imidazole glycerol phosphate synthase subunit HisH (210 aa).

The 206-residue stretch at 3–208 (PIAIIDYGMG…GELVRHAGNA (206 aa)) folds into the Glutamine amidotransferase type-1 domain. C81 acts as the Nucleophile in catalysis. Catalysis depends on residues H183 and E185.

In terms of assembly, heterodimer of HisH and HisF.

The protein resides in the cytoplasm. The enzyme catalyses 5-[(5-phospho-1-deoxy-D-ribulos-1-ylimino)methylamino]-1-(5-phospho-beta-D-ribosyl)imidazole-4-carboxamide + L-glutamine = D-erythro-1-(imidazol-4-yl)glycerol 3-phosphate + 5-amino-1-(5-phospho-beta-D-ribosyl)imidazole-4-carboxamide + L-glutamate + H(+). The catalysed reaction is L-glutamine + H2O = L-glutamate + NH4(+). Its pathway is amino-acid biosynthesis; L-histidine biosynthesis; L-histidine from 5-phospho-alpha-D-ribose 1-diphosphate: step 5/9. Functionally, IGPS catalyzes the conversion of PRFAR and glutamine to IGP, AICAR and glutamate. The HisH subunit catalyzes the hydrolysis of glutamine to glutamate and ammonia as part of the synthesis of IGP and AICAR. The resulting ammonia molecule is channeled to the active site of HisF. The chain is Imidazole glycerol phosphate synthase subunit HisH from Moorella thermoacetica (strain ATCC 39073 / JCM 9320).